The sequence spans 550 residues: Retron Ec78 probable ATPase (550 aa).

The ATP-binding motif lies at G93–T100.

In terms of biological role, probable ATPase component of antiviral defense system retron Ec78, composed of a non-coding RNA (ncRNA), a reverse transcriptase (RT), this protein and a putative HNH endonuclease. Expression of retron Ec78 confers protection against bacteriophage T5. At multiplicity of infection (MOI) of 0.02 cultures slow growth when infected with T5 but do not collapse, at MOI 2 cultures enter growth stasis. The polypeptide is Retron Ec78 probable ATPase (Escherichia coli).